The following is an 824-amino-acid chain: Intraflagellar transport protein 88 homolog (824 aa).

2 disordered regions span residues 1-27 and 111-134; these read MENVHLAPETDEDDLYSGFNDYNPAYD and AFDPLGQSRGPAPPLEAKNEDSPE. TPR repeat units lie at residues 196–229, 232–265, 271–304, 415–448, 450–483, 484–517, 518–551, 552–585, 586–619, 620–653, and 654–687; these read YSVLFNLASQYSANEMYAEALNTYQVIVKNKMFS, GRLKVNMGNIYLKQRNYSKAIKFYRMALDQIPSV, IKIMQNIGITFIKTGQYSDAINSFEHIMSMAPSL, NDLEINKAITYLRQKDFNQAVDTLKMFEKKDSRV, SAAATNLSFLYYLENEFAQASSYADLAVNSDRYN, PSALTNKGNTVFANGDYEKAAEFYKEALRNDSSC, TEALYNIGLTYKKLNRLDEALDSFLKLHAILRNS, AQVLCQIANIYELMEDPNQAIEWLMQLISVVPTD, SQALSKLGELYDSEGDKSQAFQYYYESYRYFPSN, IEVIEWLGAYYIDTQFCEKAIQYFERASLIQPTQ, and VKWQLMVASCFRRSGNYQKALDTYKEIHRKFPEN. Residues 721–731 are compositionally biased toward basic and acidic residues; sequence EMREQRIKSGR. Positions 721–824 are disordered; that stretch reads EMREQRIKSG…EELGDDLLPE (104 aa). The span at 748–757 shows a compositional bias: polar residues; sequence DSGQNNSASS. The segment covering 797–808 has biased composition (basic and acidic residues); it reads ERPKTAAKKRID. Over residues 809-824 the composition is skewed to acidic residues; the sequence is EDDFADEELGDDLLPE.

As to quaternary structure, component of the IFT complex B, at least composed of IFT20, IFT22, IFT25, IFT27, IFT46, IFT52, TRAF3IP1/IFT54, IFT57, IFT74, IFT80, IFT81, and IFT88. Interacts with IFT20, IFT22, IFT25, IFT27, IFT52, TRAF3IP1, IFT74, IFT80 and IFT81. Interacts with IFT172. Interacts with IFT57. Interacts with IFT46. Interacts with IFT70B. Interacts with C2CD3. Interacts with ENTR1 (via N-terminus). Interacts with LRRC56. Interacts with DZIP1. Interacts with CCDC38. Interacts with CCDC146. Interacts with CFAP53. In terms of tissue distribution, testis.

The protein resides in the cytoplasm. Its subcellular location is the cytoskeleton. It localises to the microtubule organizing center. The protein localises to the centrosome. It is found in the centriole. The protein resides in the cilium basal body. Its subcellular location is the cell projection. It localises to the cilium. The protein localises to the flagellum. Its function is as follows. Positively regulates primary cilium biogenesis. Also involved in autophagy since it is required for trafficking of ATG16L and the expansion of the autophagic compartment. This chain is Intraflagellar transport protein 88 homolog (Ift88), found in Mus musculus (Mouse).